Consider the following 929-residue polypeptide: ATP-dependent RNA helicase DDX42 (929 aa).

At Lys-5 the chain carries N6-acetyllysine. Arg-12 is modified (omega-N-methylarginine). Disordered regions lie at residues 25-119 and 182-203; these read KKEE…LEAF and EYDS…LPPI. Low complexity predominate over residues 35–52; that stretch reads SHSAFGAASSSSGFGKSA. Ser-58 carries the post-translational modification Phosphoserine. Acidic residues predominate over residues 70 to 84; sequence DEENAYFEDEEEDSS. Phosphoserine occurs at positions 96, 104, 109, and 111. A coiled-coil region spans residues 116–157; that stretch reads LEAFMAEVEDQAARDMKRLEEKDKERKNVKGIRDDIEEEDDQ. Ser-185 bears the Phosphoserine mark. Positions 253–281 match the Q motif motif; the sequence is SSFAHFGFDEQLMHQIRKSEYTQPTPIQC. Residues 284–459 enclose the Helicase ATP-binding domain; that stretch reads VPVALSGRDM…RDILIDPIRV (176 aa). Residue 297-304 participates in ATP binding; sequence AKTGSGKT. Residues 407–410 carry the DEAD box motif; it reads DEAD. Residues 487-632 form the Helicase C-terminal domain; that stretch reads WLTRRLVEFT…HVSKELLDLA (146 aa). 2 disordered regions span residues 662–682 and 723–929; these read ERPG…VMSN and GTSS…RWDS. A compositionally biased stretch (low complexity) spans 723 to 737; the sequence is GTSSAGASGWTSAGS. Composition is skewed to polar residues over residues 738 to 777 and 787 to 798; these read LNSV…SSAP and GVNNTASGNNSR. Residues 739–828 form a necessary for interaction with TP53BP2 region; the sequence is NSVPTNSAQQ…RHSHGDGGNR (90 aa). A compositionally biased stretch (basic and acidic residues) spans 821 to 911; sequence SHGDGGNRHG…KVDSKTDKTP (91 aa). Lys-894 participates in a covalent cross-link: Glycyl lysine isopeptide (Lys-Gly) (interchain with G-Cter in SUMO2).

This sequence belongs to the DEAD box helicase family. DDX42 subfamily. Transient component of the SF3B subcomplex of the 17S U2 SnRNP complex. Interacts (via the C-terminus) with TP53BP2; the interaction is not inhibitied by TP53BP2 ubiquitination and is independent of p53/TP53.

Its subcellular location is the cytoplasm. It is found in the nucleus. The catalysed reaction is ATP + H2O = ADP + phosphate + H(+). Functionally, ATP-dependent RNA helicase that binds to partially double-stranded RNAs (dsRNAs) in order to unwind RNA secondary structures. Unwinding is promoted in the presence of single-strand binding proteins. Also mediates RNA duplex formation thereby displacing the single-strand RNA binding protein. ATP and ADP modulate its activity: ATP binding and hydrolysis by DDX42 triggers RNA strand separation, whereas the ADP-bound form of the protein triggers annealing of complementary RNA strands. Required for assembly of the 17S U2 SnRNP complex of the spliceosome, a large ribonucleoprotein complex that removes introns from transcribed pre-mRNAs: DDX42 associates transiently with the SF3B subcomplex of the 17S U2 SnRNP complex and is released after fulfilling its role in the assembly of 17S U2 SnRNP. Involved in the survival of cells by interacting with TP53BP2 and thereby counteracting the apoptosis-stimulating activity of TP53BP2. Relocalizes TP53BP2 to the cytoplasm. In Mus musculus (Mouse), this protein is ATP-dependent RNA helicase DDX42 (Ddx42).